The sequence spans 485 residues: NADH-quinone oxidoreductase subunit N (485 aa).

A run of 14 helical transmembrane segments spans residues 10–30 (AMLPLLIVGLTVVVVMLSIAW), 35–55 (FINATLTVIGLNLALLSLYFV), 75–95 (FYIGLVIVASLATSTFAYPWL), 104–124 (EFYLLVLIATMGGILLASANH), 125–145 (LASLFLGIELISLPLFGLIGY), 159–179 (YMLLSAAASSFLLFGMALLYA), 203–223 (ILAGLGMMIVGLGFKLSLVPF), 235–255 (PAPVSTFLATASKIAIFAVVM), 271–291 (LVLSLIAVASILFGNLMAISQ), 297–317 (LLGYSSIAHLGYLLIALVAVQ), 327–347 (GVYLAGYLFSSLGAFGVVSLM), 374–394 (AVMTVMMLSLAGIPMTLGFIG), 408–427 (WWLTGAVVLGSAIGLYYYLR), and 449–469 (ALTAGGVVVLISAILVLVLGI).

This sequence belongs to the complex I subunit 2 family. NDH-1 is composed of 13 different subunits. Subunits NuoA, H, J, K, L, M, N constitute the membrane sector of the complex.

Its subcellular location is the cell inner membrane. It carries out the reaction a quinone + NADH + 5 H(+)(in) = a quinol + NAD(+) + 4 H(+)(out). In terms of biological role, NDH-1 shuttles electrons from NADH, via FMN and iron-sulfur (Fe-S) centers, to quinones in the respiratory chain. The immediate electron acceptor for the enzyme in this species is believed to be ubiquinone. Couples the redox reaction to proton translocation (for every two electrons transferred, four hydrogen ions are translocated across the cytoplasmic membrane), and thus conserves the redox energy in a proton gradient. In Yersinia enterocolitica serotype O:8 / biotype 1B (strain NCTC 13174 / 8081), this protein is NADH-quinone oxidoreductase subunit N.